We begin with the raw amino-acid sequence, 907 residues long: DNA ligase 4 (907 aa).

Residues Glu-273, Lys-275, Arg-280, Glu-333, Phe-378, Glu-438, Lys-443, Lys-460, and Lys-462 each coordinate ATP. Lys-275 (N6-AMP-lysine intermediate) is an active-site residue. A Mg(2+)-binding site is contributed by Glu-333. Mg(2+) is bound at residue Glu-438. BRCT domains are found at residues Pro-655–Ile-754 and Val-800–Cys-906.

Belongs to the ATP-dependent DNA ligase family. It depends on Mg(2+) as a cofactor.

Its subcellular location is the nucleus. It carries out the reaction ATP + (deoxyribonucleotide)n-3'-hydroxyl + 5'-phospho-(deoxyribonucleotide)m = (deoxyribonucleotide)n+m + AMP + diphosphate.. Its function is as follows. DNA ligase involved in DNA non-homologous end joining (NHEJ); required for double-strand break (DSB) repair. In Kluyveromyces lactis (strain ATCC 8585 / CBS 2359 / DSM 70799 / NBRC 1267 / NRRL Y-1140 / WM37) (Yeast), this protein is DNA ligase 4 (LIG4).